A 177-amino-acid chain; its full sequence is MSRVGKKPVPVPAGVTATVDGQTVKVKGSKGELQFRVPDQVAVTHENGAISVQPRSQTKEARALWGLSRAQVANLVEGVTKGFEKKLEINGVGYRAAVAGKVLKLSLGYSHDIEYEIPAGITITTPRPVEIIVAGIDKQRVGQIAAEIREYRSPEPYKGKGVKYADEFIFRKEGKKK.

It belongs to the universal ribosomal protein uL6 family. Part of the 50S ribosomal subunit.

Functionally, this protein binds to the 23S rRNA, and is important in its secondary structure. It is located near the subunit interface in the base of the L7/L12 stalk, and near the tRNA binding site of the peptidyltransferase center. This is Large ribosomal subunit protein uL6 from Methylobacterium nodulans (strain LMG 21967 / CNCM I-2342 / ORS 2060).